Here is a 1302-residue protein sequence, read N- to C-terminus: MEELSADEIRRRRLARLAGGQTSQPTTPLTSPQRENPPGPPIAASAPGPSQSLGLNVHNMTPATSPIGASGVAHRSQSSEGVSSLSSSPSNSLETQSQSLSRSQSMDIDGVSCEKSMSQVDVDSGIENMEVDENDRREKRSLSDKEPSSGPEVSEEQALQLVCKIFRVSWKDRDRDVIFLSSLSAQFKQNPKEVFSDFKDLIGQILMEVLMMSTQTRDENPFASLTATSQPIAAAARSPDRNLLLNTGSNPGTSPMFCSVASFGASSLSSLYESSPAPTPSFWSSVPVMGPSLASPSRAASQLAVPSTPLSPHSAASGTAAGSQPSSPRYRPYTVTHPWASSGVSILSSSPSPPALASSPQAVPASSSRQRPSSTGPPLPPASPSATSRRPSSLRISPSLGASGGASNWDSYSDHFTIETCKETDMLNYLIECFDRVGIEEKKAPKMCSQPAVSQLLSNIRSQCISHTALVLQGSLTQPRSLQQPSFLVPYMLCRNLPYGFIQELVRTTHQDEEVFKQIFIPILQGLALAAKECSLDSDYFKYPLMALGELCETKFGKTHPVCNLVASLRLWLPKSLSPGCGRELQRLSYLGAFFSFSVFAEDDVKVVEKYFSGPAITLENTRVVSQSLQHYLELGRQELFKILHSILLNGETREAALSYMAAVVNANMKKAQMQTDDRLVSTDGFMLNFLWVLQQLSTKIKLETVDPTYIFHPRCRITLPNDETRVNATMEDVNDWLTELYGDQPPFSEPKFPTECFFLTLHAHHLSILPSCRRYIRRLRAIRELNRTVEDLKNNESQWKDSPLATRHREMLKRCKTQLKKLVRCKACADAGLLDESFLRRCLNFYGLLIQLLLRILDPAYPDITLPLNSDVPKVFAALPEFYVEDVAEFLFFIVQYSPQALYEPCTQDIVMFLVVMLCNQNYIRNPYLVAKLVEVMFMTNPAVQPRTQKFFEMIENHPLSTKLLVPSLMKFYTDVEHTGATSEFYDKFTIRYHISTIFKSLWQNIAHHGTFMEEFNSGKQFVRYINMLINDTTFLLDESLESLKRIHEVQEEMKNKEQWDQLPRDQQQARQSQLAQDERVSRSYLALATETVDMFHILTKQVQKPFLRPELGPRLAAMLNFNLQQLCGPKCRDLKVENPEKYGFEPKKLLDQLTDIYLQLDCARFAKAIADDQRSYSKELFEEVISKMRKAGIKSTIAIEKFKLLAEKVEEIVAKNARAEIDYSDAPDEFRDPLMDTLMTDPVRLPSGTIMDRSIILRHLLNSPTDPFNRQTLTESMLEPVPELKEQIQAWMREKQNSDH.

Methionine 1 bears the N-acetylmethionine mark. Positions methionine 1–glutamate 155 are disordered. Residues arginine 16–glutamine 33 show a composition bias toward low complexity. A phosphoserine mark is found at serine 23 and serine 31. Positions glutamine 51 to threonine 64 are enriched in polar residues. Residues serine 76 to serine 99 show a composition bias toward low complexity. Phosphoserine is present on residues serine 84, serine 88, serine 90, serine 101, serine 103, serine 105, and serine 124. Positions asparagine 134 to proline 147 are enriched in basic and acidic residues. Serine 238 bears the Phosphoserine mark. The span at alanine 299–serine 327 shows a compositional bias: polar residues. The disordered stretch occupies residues alanine 299 to alanine 406. Over residues alanine 340–serine 374 the composition is skewed to low complexity. Serine 383 is subject to Phosphoserine. Positions proline 384 to leucine 400 are enriched in low complexity. Phosphoserine is present on residues serine 803 and serine 969. The disordered stretch occupies residues asparagine 1057 to alanine 1077. Residues arginine 1066–alanine 1077 are compositionally biased toward low complexity. A U-box domain is found at aspartate 1227 to serine 1300. Serine 1265 carries the phosphoserine modification.

It belongs to the ubiquitin conjugation factor E4 family. As to quaternary structure, interacts with VCP/p97. Interacts with STUB1/CHIP and UNC45B. Post-translationally, proteolytically cleaved by caspases during apoptosis. Cleaved efficiently at Asp-123 by caspase-6 and granzyme B. Cleaved with approximately 10-fold less efficiency at Asp-109 by caspase-3 and caspase-7. In terms of tissue distribution, expressed in differentiated myotubes (at protein level). Highest expression in ovary, testis, heart and skeletal muscle. Expression is low in colon, thymus and peripheral blood leukocytes. Almost undetectable in lung and spleen.

The protein localises to the cytoplasm. It localises to the nucleus. It catalyses the reaction S-ubiquitinyl-[E2 ubiquitin-conjugating enzyme]-L-cysteine + [acceptor protein]-L-lysine = [E2 ubiquitin-conjugating enzyme]-L-cysteine + N(6)-ubiquitinyl-[acceptor protein]-L-lysine.. The protein operates within protein modification; protein ubiquitination. Functionally, ubiquitin-protein ligase that probably functions as an E3 ligase in conjunction with specific E1 and E2 ligases. May also function as an E4 ligase mediating the assembly of polyubiquitin chains on substrates ubiquitinated by another E3 ubiquitin ligase. May regulate myosin assembly in striated muscles together with STUB1 and VCP/p97 by targeting myosin chaperone UNC45B for proteasomal degradation. The polypeptide is Ubiquitin conjugation factor E4 B (Homo sapiens (Human)).